The sequence spans 513 residues: Mannosyl-oligosaccharide alpha-1,2-mannosidase 1B (513 aa).

The signal sequence occupies residues 1-21 (MHLPSLSLSLTALAIASPSAA). N-linked (GlcNAc...) asparagine glycosylation is found at Asn97, Asn117, Asn150, Asn184, Asn251, Asn322, Asn348, and Asn368. Residues Cys334 and Cys363 are joined by a disulfide bond. The active-site Proton donor is Glu377. Thr503 is a binding site for Ca(2+).

This sequence belongs to the glycosyl hydrolase 47 family. In terms of assembly, monomer. Ca(2+) serves as cofactor. The cofactor is Mg(2+).

The protein resides in the cytoplasmic vesicle lumen. The catalysed reaction is N(4)-(alpha-D-Man-(1-&gt;2)-alpha-D-Man-(1-&gt;2)-alpha-D-Man-(1-&gt;3)-[alpha-D-Man-(1-&gt;2)-alpha-D-Man-(1-&gt;3)-[alpha-D-Man-(1-&gt;2)-alpha-D-Man-(1-&gt;6)]-alpha-D-Man-(1-&gt;6)]-beta-D-Man-(1-&gt;4)-beta-D-GlcNAc-(1-&gt;4)-beta-D-GlcNAc)-L-asparaginyl-[protein] (N-glucan mannose isomer 9A1,2,3B1,2,3) + 4 H2O = N(4)-(alpha-D-Man-(1-&gt;3)-[alpha-D-Man-(1-&gt;3)-[alpha-D-Man-(1-&gt;6)]-alpha-D-Man-(1-&gt;6)]-beta-D-Man-(1-&gt;4)-beta-D-GlcNAc-(1-&gt;4)-beta-D-GlcNAc)-L-asparaginyl-[protein] (N-glucan mannose isomer 5A1,2) + 4 beta-D-mannose. It carries out the reaction N(4)-(alpha-D-Man-(1-&gt;2)-alpha-D-Man-(1-&gt;2)-alpha-D-Man-(1-&gt;3)-[alpha-D-Man-(1-&gt;3)-[alpha-D-Man-(1-&gt;2)-alpha-D-Man-(1-&gt;6)]-alpha-D-Man-(1-&gt;6)]-beta-D-Man-(1-&gt;4)-beta-D-GlcNAc-(1-&gt;4)-beta-D-GlcNAc)-L-asparaginyl-[protein] (N-glucan mannose isomer 8A1,2,3B1,3) + 3 H2O = N(4)-(alpha-D-Man-(1-&gt;3)-[alpha-D-Man-(1-&gt;3)-[alpha-D-Man-(1-&gt;6)]-alpha-D-Man-(1-&gt;6)]-beta-D-Man-(1-&gt;4)-beta-D-GlcNAc-(1-&gt;4)-beta-D-GlcNAc)-L-asparaginyl-[protein] (N-glucan mannose isomer 5A1,2) + 3 beta-D-mannose. Its pathway is protein modification; protein glycosylation. Involved in the maturation of Asn-linked oligosaccharides. Progressively trims alpha-1,2-linked mannose residues from Man(9)GlcNAc(2) to produce Man(5)GlcNAc(2). This chain is Mannosyl-oligosaccharide alpha-1,2-mannosidase 1B (mns1B), found in Aspergillus phoenicis (Aspergillus saitoi).